Consider the following 224-residue polypeptide: Ribose-5-phosphate isomerase A (224 aa).

Substrate contacts are provided by residues 26–29 (TGST), 82–85 (DGAD), and 95–98 (KGGG). Glu104 serves as the catalytic Proton acceptor. Position 122 (Lys122) interacts with substrate.

This sequence belongs to the ribose 5-phosphate isomerase family. In terms of assembly, homodimer.

It catalyses the reaction aldehydo-D-ribose 5-phosphate = D-ribulose 5-phosphate. Its pathway is carbohydrate degradation; pentose phosphate pathway; D-ribose 5-phosphate from D-ribulose 5-phosphate (non-oxidative stage): step 1/1. Functionally, catalyzes the reversible conversion of ribose-5-phosphate to ribulose 5-phosphate. This chain is Ribose-5-phosphate isomerase A, found in Lactococcus lactis subsp. cremoris (strain MG1363).